The chain runs to 356 residues: Phosphoribosylformylglycinamidine cyclo-ligase (356 aa).

This sequence belongs to the AIR synthase family.

It is found in the cytoplasm. The enzyme catalyses 2-formamido-N(1)-(5-O-phospho-beta-D-ribosyl)acetamidine + ATP = 5-amino-1-(5-phospho-beta-D-ribosyl)imidazole + ADP + phosphate + H(+). It participates in purine metabolism; IMP biosynthesis via de novo pathway; 5-amino-1-(5-phospho-D-ribosyl)imidazole from N(2)-formyl-N(1)-(5-phospho-D-ribosyl)glycinamide: step 2/2. This is Phosphoribosylformylglycinamidine cyclo-ligase from Rhizobium meliloti (strain 1021) (Ensifer meliloti).